We begin with the raw amino-acid sequence, 348 residues long: Spore development regulator vosA (348 aa).

Residues 46–244 form the Velvet domain; sequence ALSPSSCFLS…SDQGVRLRLR (199 aa). The segment at 250–294 is disordered; sequence MMSNKRSISGSGDLTSDQSQQQQQQQPLAKKRREDSVESANPSSL. Residues 253 to 266 show a composition bias toward polar residues; the sequence is NKRSISGSGDLTSD. Positions 274–280 match the Nuclear localization signal motif; the sequence is QQPLAKK.

It belongs to the velvet family. VosA subfamily. Forms a heterodimeric complex with VEL2; the formation of the VEL2-VOS1 complex is light-dependent.

The protein localises to the nucleus. Functionally, component of the velB-VosA heterodimeric complex that plays a dual role in activating genes associated with spore maturation and repressing certain development-associated genes. The complex binds DNA through the DNA-binding domain of vosA that recognizes an 11-nucleotide consensus sequence 5'-CTGGCCGCGGC-3' consisting of two motifs in the promoters of key developmental regulatory genes. Regulates spore viability, trehalose accumulation, and tolerance to thermal and oxidative as well as ion stresses. Positively regulates conidial pigmentation and pathogenicity on barley. This Cochliobolus sativus (strain ND90Pr / ATCC 201652) (Common root rot and spot blotch fungus) protein is Spore development regulator vosA.